Reading from the N-terminus, the 309-residue chain is Homoserine O-succinyltransferase (309 aa).

The active-site Acyl-thioester intermediate is the Cys-142. Positions 163 and 192 each coordinate substrate. The Proton acceptor role is filled by His-235. Glu-237 is an active-site residue. Arg-249 provides a ligand contact to substrate.

Belongs to the MetA family. As to quaternary structure, homodimer.

It localises to the cytoplasm. It catalyses the reaction L-homoserine + succinyl-CoA = O-succinyl-L-homoserine + CoA. Its pathway is amino-acid biosynthesis; L-methionine biosynthesis via de novo pathway; O-succinyl-L-homoserine from L-homoserine: step 1/1. In terms of biological role, transfers a succinyl group from succinyl-CoA to L-homoserine, forming succinyl-L-homoserine. In Escherichia fergusonii (strain ATCC 35469 / DSM 13698 / CCUG 18766 / IAM 14443 / JCM 21226 / LMG 7866 / NBRC 102419 / NCTC 12128 / CDC 0568-73), this protein is Homoserine O-succinyltransferase.